The sequence spans 178 residues: Caveolin-1 (178 aa).

Position 2 is an N-acetylserine (Ser-2). A Phosphoserine modification is found at Ser-2. Residues Ser-2–Val-94 form a required for homooligomerization region. The Cytoplasmic portion of the chain corresponds to Ser-2–Ser-104. The residue at position 5 (Lys-5) is an N6-acetyllysine; alternate. A Glycyl lysine isopeptide (Lys-Gly) (interchain with G-Cter in ubiquitin); alternate cross-link involves residue Lys-5. At Tyr-6 the chain carries Phosphotyrosine. A Phosphoserine modification is found at Ser-9. Tyr-14 is modified (phosphotyrosine; by ABL1). Tyr-25 carries the post-translational modification Phosphotyrosine. Residues Lys-26 and Lys-30 each participate in a glycyl lysine isopeptide (Lys-Gly) (interchain with G-Cter in ubiquitin) cross-link. Ser-37 carries the post-translational modification Phosphoserine. Residues Lys-39, Lys-47, and Lys-57 each participate in a glycyl lysine isopeptide (Lys-Gly) (interchain with G-Cter in ubiquitin) cross-link. The interaction with CAVIN3 stretch occupies residues Asp-82–Val-94. Residues Ala-105–Leu-125 constitute an intramembrane region (helical). Residues His-126 to Ile-178 lie on the Cytoplasmic side of the membrane. The segment at Val-131–Gln-142 is interacts with SPRY1, SPRY2, SPRY3 and SPRY4. S-palmitoyl cysteine attachment occurs at residues Cys-133, Cys-143, and Cys-156. The interval Ser-149 to Phe-160 is interacts with SPRY1, SPRY2, and SPRY4. The interacts with SPRY1, SPRY2, SPRY3 and SPRY4 stretch occupies residues Phe-167–Ile-178.

This sequence belongs to the caveolin family. As to quaternary structure, homooligomer. Interacts with GLIPR2. Interacts with NOSTRIN. Interacts with SNAP25 and STX1A. Interacts (via the N-terminus) with DPP4; the interaction is direct. Interacts with CTNNB1, CDH1 and JUP. Interacts with PACSIN2; this interaction induces membrane tubulation. Interacts with SLC7A9. Interacts with BMX and BTK. Interacts with TGFBR1. Interacts with CAVIN3 (via leucine-zipper domain) in a cholesterol-sensitive manner. Interacts with CAVIN1. Interacts with EHD2 in a cholesterol-dependent manner. Forms a ternary complex with UBXN6 and VCP; mediates CAV1 targeting to lysosomes for degradation. Interacts with ABCG1; this interaction regulates ABCG1-mediated cholesterol efflux. Interacts with NEU3; this interaction enhances NEU3 sialidase activity within caveola. Interacts (via C-terminus) with SPRY1, SPRY2 (via C-terminus), SPRY3, and SPRY4. Interacts with IGFBP5; this interaction allows trafficking of IGFBP5 from the plasma membrane to the nucleus. Phosphorylated at Tyr-14 by ABL1 in response to oxidative stress. Post-translationally, ubiquitinated. Undergo monoubiquitination and multi- and/or polyubiquitination. Monoubiquitination of N-terminal lysines promotes integration in a ternary complex with UBXN6 and VCP which promotes oligomeric CAV1 targeting to lysosomes for degradation. Ubiquitinated by ZNRF1; leading to degradation and modulation of the TLR4-mediated immune response.

Its subcellular location is the golgi apparatus membrane. It localises to the cell membrane. It is found in the membrane. The protein localises to the caveola. The protein resides in the membrane raft. In terms of biological role, may act as a scaffolding protein within caveolar membranes. Forms a stable heterooligomeric complex with CAV2 that targets to lipid rafts and drives caveolae formation. Mediates the recruitment of CAVIN proteins (CAVIN1/2/3/4) to the caveolae. Interacts directly with G-protein alpha subunits and can functionally regulate their activity. Involved in the costimulatory signal essential for T-cell receptor (TCR)-mediated T-cell activation. Its binding to DPP4 induces T-cell proliferation and NF-kappa-B activation in a T-cell receptor/CD3-dependent manner. Recruits CTNNB1 to caveolar membranes and may regulate CTNNB1-mediated signaling through the Wnt pathway. Negatively regulates TGFB1-mediated activation of SMAD2/3 by mediating the internalization of TGFBR1 from membrane rafts leading to its subsequent degradation. Binds 20(S)-hydroxycholesterol (20(S)-OHC). The sequence is that of Caveolin-1 (CAV1) from Pongo abelii (Sumatran orangutan).